The following is a 511-amino-acid chain: ATP synthase subunit alpha (511 aa).

Position 169–176 (169–176 (GDRQTGKT)) interacts with ATP.

The protein belongs to the ATPase alpha/beta chains family. As to quaternary structure, F-type ATPases have 2 components, CF(1) - the catalytic core - and CF(0) - the membrane proton channel. CF(1) has five subunits: alpha(3), beta(3), gamma(1), delta(1), epsilon(1). CF(0) has three main subunits: a(1), b(2) and c(9-12). The alpha and beta chains form an alternating ring which encloses part of the gamma chain. CF(1) is attached to CF(0) by a central stalk formed by the gamma and epsilon chains, while a peripheral stalk is formed by the delta and b chains.

It is found in the cell inner membrane. The enzyme catalyses ATP + H2O + 4 H(+)(in) = ADP + phosphate + 5 H(+)(out). In terms of biological role, produces ATP from ADP in the presence of a proton gradient across the membrane. The alpha chain is a regulatory subunit. The chain is ATP synthase subunit alpha from Janthinobacterium sp. (strain Marseille) (Minibacterium massiliensis).